The following is a 423-amino-acid chain: Protein IQ-DOMAIN 16 (423 aa).

IQ domains lie at 99–127 (RHWA…GIVK) and 128–150 (LQAL…CIKA). Positions 231-251 (QKKLEIAIKREKAQALALSNQ) form a coiled coil. The interval 235–252 (EIAIKREKAQALALSNQI) is calmodulin-binding.

Belongs to the IQD family. Binds to multiple calmodulin (CaM) in the presence of Ca(2+) and CaM-like proteins.

The protein resides in the cytoplasm. It localises to the cytoskeleton. The protein localises to the cell membrane. Its function is as follows. May be involved in cooperative interactions with calmodulins or calmodulin-like proteins. Recruits calmodulin proteins to microtubules, thus being a potential scaffold in cellular signaling and trafficking. Regulates cell shape and elongation in aerial organs (i.e. cotyledons, leaves, and hypocotyls) probably by regulating cortical microtubules (MT) arrays orientation. May associate with nucleic acids and regulate gene expression at the transcriptional or post-transcriptional level. The protein is Protein IQ-DOMAIN 16 of Arabidopsis thaliana (Mouse-ear cress).